A 182-amino-acid chain; its full sequence is uncharacterized protein (182 aa).

Helical transmembrane passes span 58 to 78 (ILFG…YVVY) and 81 to 101 (PVSI…IIIW).

This sequence to M.jannaschii MJ0803.

It localises to the cell membrane. This is an uncharacterized protein from Methanocaldococcus jannaschii (strain ATCC 43067 / DSM 2661 / JAL-1 / JCM 10045 / NBRC 100440) (Methanococcus jannaschii).